We begin with the raw amino-acid sequence, 982 residues long: MSSKMVISEPGLNWDISPKNGLKTFFSRENYKDHSMAPSLKELRVLSNRRIGENLNASASSVENEPAVSSATQAKEKVKTTIGMVLLPKPRVPYPRFSRFSQREQRSYVDLLVKYAKIPANSKAVGINKNDYLQYLDMKKHVNEEVTEFLKFLQNSAKKCAQDYNMLSDDARLFTEKILRACIEQVKKYSEFYTLHEVTSLMGFFPFRVEMGLKLEKTLLALGSVKYVKTVFPSMPIKLQLSKDDIATIETSEQTAEAMHYDISKDPNAEKLVSRYHPQIALTSQSLFTLLNNHGPTYKEQWEIPVCIQVIPVAGSKPVKVIYINSPLPQKKMTMRERNQIFHEVPLKFMMSKNTSVPVSAVFMDKPEEFISEMDMSCEVNECRKIESLENLYLDFDDDVTELETFGVTTTKVSKSPSPASTSTVPNMTDAPTAPKAGTTTVAPSAPDISANSRSLSQILMEQLQKEKQLVTGMDGGPEECKNKDDQGFESCEKVSNSDKPLIQDSDLKTSDALQLENSQEIETSNKNDMTIDILHADGERPNVLENLDNSKEKTVGSEAAKTEDTVLCSSDTDEECLIIDTECKNNSDGKTAVVGSNLSSRPASPNSSSGQASVGNQTNTACSPEESCVLKKPIKRVYKKFDPVGEILKMQDELLKPISRKVPELPLMNLENSKQPSVSEQLSGPSDSSSWPKSGWPSAFQKPKGRLPYELQDYVEDTSEYLAPQEGNFVYKLFSLQDLLLLVRCSVQRIETRPRSKKRKKIRRQFPVYVLPKVEYQACYGVEALTESELCRLWTESLLHSNSSFYVGHIDAFTSKLFLLEEITSEELKEKLSALKISNLFNILQHILKKLSSLQEGSYLLSHAAEDSSLLIYKASDGKVTRTAYNLYKTHCGLPGVPSSLSVPWVPLDPSLLLPYHIHHGRIPCTFPPKSLDTTTQQKIGGTRMPTRSHRNPVSMETKSSCLPAQQVETEGVAPHKRKIT.

A phosphoserine mark is found at Ser-17 and Ser-326. The span at 410–427 shows a compositional bias: polar residues; it reads TTKVSKSPSPASTSTVPN. Disordered stretches follow at residues 410 to 450 and 473 to 504; these read TTKV…PDIS and GMDG…PLIQ. The segment covering 479-497 has biased composition (basic and acidic residues); it reads EECKNKDDQGFESCEKVSN. A Phosphoserine modification is found at Ser-571. At Thr-573 the chain carries Phosphothreonine. Disordered regions lie at residues 595-623, 672-697, and 930-982; these read VGSN…NTAC, ENSK…KSGW, and PKSL…RKIT. Positions 597–610 are enriched in low complexity; sequence SNLSSRPASPNSSS. Composition is skewed to polar residues over residues 611–623 and 672–683; these read GQAS…NTAC and ENSKQPSVSEQL. The span at 684–697 shows a compositional bias: low complexity; that stretch reads SGPSDSSSWPKSGW. Over residues 956–970 the composition is skewed to polar residues; that stretch reads SMETKSSCLPAQQVE.

The protein belongs to the ICE2 family. Component of the little elongation complex (LEC), at least composed of ELL (ELL, ELL2 or ELL3), ZC3H8, ICE1 and ICE2. Interacts with ICE1 (via C-terminus domain). Interacts with ELL. As to expression, expressed at low levels in lung and testis.

The protein resides in the nucleus. Component of the little elongation complex (LEC), a complex required to regulate small nuclear RNA (snRNA) gene transcription by RNA polymerase II and III. The polypeptide is Little elongation complex subunit 2 (ICE2) (Homo sapiens (Human)).